The sequence spans 137 residues: Transcription antitermination protein NusB (137 aa).

It belongs to the NusB family.

Involved in transcription antitermination. Required for transcription of ribosomal RNA (rRNA) genes. Binds specifically to the boxA antiterminator sequence of the ribosomal RNA (rrn) operons. The chain is Transcription antitermination protein NusB from Clavibacter michiganensis subsp. michiganensis (strain NCPPB 382).